A 351-amino-acid chain; its full sequence is Glycerol-3-phosphate dehydrogenase 1-like protein (351 aa).

12 to 17 (GSGNWG) lines the NAD(+) pocket. Lysine 122 provides a ligand contact to substrate. Alanine 155 serves as a coordination point for NAD(+). The active-site Proton acceptor is the lysine 206. NAD(+) contacts are provided by arginine 271, lysine 298, and glutamine 300. Position 271–272 (271–272 (RN)) interacts with substrate.

It belongs to the NAD-dependent glycerol-3-phosphate dehydrogenase family. In terms of assembly, interacts with SCN5A.

The protein resides in the cytoplasm. The enzyme catalyses sn-glycerol 3-phosphate + NAD(+) = dihydroxyacetone phosphate + NADH + H(+). Functionally, plays a role in regulating cardiac sodium current; decreased enzymatic activity with resulting increased levels of glycerol 3-phosphate activating the DPD1L-dependent SCN5A phosphorylation pathway, may ultimately lead to decreased sodium current; cardiac sodium current may also be reduced due to alterations of NAD(H) balance induced by DPD1L. In Pongo abelii (Sumatran orangutan), this protein is Glycerol-3-phosphate dehydrogenase 1-like protein (GPD1L).